Reading from the N-terminus, the 625-residue chain is Chaperone protein HtpG (625 aa).

The tract at residues 1-332 (MSNKQNTAVQ…TEDLSLNVSR (332 aa)) is a; substrate-binding. Residues 333–545 (EIVQSSPVMS…KDAMDSQMER (213 aa)) form a b region. A c region spans residues 546-625 (MMKMMQQEMP…ELIEAATLSR (80 aa)).

It belongs to the heat shock protein 90 family. In terms of assembly, homodimer.

The protein localises to the cytoplasm. Its function is as follows. Molecular chaperone. Has ATPase activity. This chain is Chaperone protein HtpG, found in Chlorobium luteolum (strain DSM 273 / BCRC 81028 / 2530) (Pelodictyon luteolum).